The chain runs to 459 residues: Argininosuccinate lyase (459 aa).

The protein belongs to the lyase 1 family. Argininosuccinate lyase subfamily.

Its subcellular location is the cytoplasm. It catalyses the reaction 2-(N(omega)-L-arginino)succinate = fumarate + L-arginine. The protein operates within amino-acid biosynthesis; L-arginine biosynthesis; L-arginine from L-ornithine and carbamoyl phosphate: step 3/3. The chain is Argininosuccinate lyase from Lactococcus lactis subsp. lactis (strain IL1403) (Streptococcus lactis).